We begin with the raw amino-acid sequence, 166 residues long: Small ribosomal subunit protein uS5 (166 aa).

One can recognise an S5 DRBM domain in the interval 11-74 (LQEKLIAVNR…EKARRNMMNV (64 aa)).

It belongs to the universal ribosomal protein uS5 family. In terms of assembly, part of the 30S ribosomal subunit. Contacts proteins S4 and S8.

With S4 and S12 plays an important role in translational accuracy. Its function is as follows. Located at the back of the 30S subunit body where it stabilizes the conformation of the head with respect to the body. This is Small ribosomal subunit protein uS5 from Pectobacterium atrosepticum (strain SCRI 1043 / ATCC BAA-672) (Erwinia carotovora subsp. atroseptica).